Consider the following 443-residue polypeptide: Tubulin epsilon and delta complex protein 2 (443 aa).

Residues 8-33 (RRLVAELRDALDSCAERQRQLEQSLR) are a coiled coil. Disordered regions lie at residues 45-72 (AETP…PSPQ) and 93-146 (GLSK…PWVP). The segment covering 106-124 (LKSGSASTATKASAPPSTS) has biased composition (low complexity).

In terms of assembly, interacts with TEDC1. Found in a complex with TEDC1, TEDC2, TUBE1 and TUBD1.

The protein localises to the cell projection. Its subcellular location is the cilium. The protein resides in the cytoplasm. It is found in the cytoskeleton. It localises to the microtubule organizing center. The protein localises to the centrosome. Its subcellular location is the centriole. Functionally, acts as a positive regulator of ciliary hedgehog signaling. Required for centriole stability. The sequence is that of Tubulin epsilon and delta complex protein 2 from Bos taurus (Bovine).